Consider the following 471-residue polypeptide: Eukaryotic translation initiation factor 3 subunit L (471 aa).

Positions 252–446 (DAIRMFSHIL…DLDYAMQGDL (195 aa)) constitute a PCI domain.

It belongs to the eIF-3 subunit L family.

The protein resides in the cytoplasm. Its function is as follows. Component of the eukaryotic translation initiation factor 3 (eIF-3) complex, which is involved in protein synthesis of a specialized repertoire of mRNAs and, together with other initiation factors, stimulates binding of mRNA and methionyl-tRNAi to the 40S ribosome. The eIF-3 complex specifically targets and initiates translation of a subset of mRNAs involved in cell proliferation. This chain is Eukaryotic translation initiation factor 3 subunit L, found in Pyricularia oryzae (strain Y34) (Rice blast fungus).